A 660-amino-acid polypeptide reads, in one-letter code: UvrABC system protein B (660 aa).

A Helicase ATP-binding domain is found at 26 to 414 (KKVLAGQRHQ…PEMTEQIIRP (389 aa)). An ATP-binding site is contributed by 39-46 (GATGTGKT). The Beta-hairpin motif lies at 92 to 115 (YYDYYQPEAYVPSTDTFIEKDASI). In terms of domain architecture, Helicase C-terminal spans 430 to 596 (QIDNLIEEIR…TIRKEVRDVI (167 aa)). One can recognise a UVR domain in the interval 624–659 (EKVIEQMENEMKQAAKDLDFEKAAELRDVILELKAE).

The protein belongs to the UvrB family. Forms a heterotetramer with UvrA during the search for lesions. Interacts with UvrC in an incision complex.

Its subcellular location is the cytoplasm. The UvrABC repair system catalyzes the recognition and processing of DNA lesions. A damage recognition complex composed of 2 UvrA and 2 UvrB subunits scans DNA for abnormalities. Upon binding of the UvrA(2)B(2) complex to a putative damaged site, the DNA wraps around one UvrB monomer. DNA wrap is dependent on ATP binding by UvrB and probably causes local melting of the DNA helix, facilitating insertion of UvrB beta-hairpin between the DNA strands. Then UvrB probes one DNA strand for the presence of a lesion. If a lesion is found the UvrA subunits dissociate and the UvrB-DNA preincision complex is formed. This complex is subsequently bound by UvrC and the second UvrB is released. If no lesion is found, the DNA wraps around the other UvrB subunit that will check the other stand for damage. The chain is UvrABC system protein B from Oceanobacillus iheyensis (strain DSM 14371 / CIP 107618 / JCM 11309 / KCTC 3954 / HTE831).